Here is a 457-residue protein sequence, read N- to C-terminus: Probable xyloglucan 6-xylosyltransferase 3 (457 aa).

Positions 1–40 are disordered; it reads MGKEDGFRTQKRVSTASSAAAGVLPTTMASGGVRRPPPRG. The Cytoplasmic segment spans residues 1 to 51; sequence MGKEDGFRTQKRVSTASSAAAGVLPTTMASGGVRRPPPRGRQIQKTFNNVK. A helical; Signal-anchor for type II membrane protein membrane pass occupies residues 52–71; it reads MTILCGFVTILVLRGTIGIN. Over 72–457 the chain is Lumenal; it reads FGTSDADVVN…TTPLKIEARS (386 aa). Residues asparagine 115 and asparagine 431 are each glycosylated (N-linked (GlcNAc...) asparagine).

The protein belongs to the glycosyltransferase 34 family.

The protein resides in the golgi apparatus membrane. It catalyses the reaction Transfers an alpha-D-xylosyl residue from UDP-D-xylose to a glucose residue in xyloglucan, forming an alpha-(1-&gt;6)-D-xylosyl-D-glucose linkage.. Functionally, probable xyloglucan xylosyltransferase involved in the biosynthesis of xyloglucan. This chain is Probable xyloglucan 6-xylosyltransferase 3, found in Arabidopsis thaliana (Mouse-ear cress).